The following is a 263-amino-acid chain: Endonuclease 8 (263 aa).

Pro-2 acts as the Schiff-base intermediate with DNA in catalysis. Residue Glu-3 is the Proton donor of the active site. The active-site Proton donor; for beta-elimination activity is the Lys-53. Residues Gln-70, Arg-125, and Asn-169 each contribute to the DNA site. The FPG-type zinc finger occupies 229 to 263; it reads KVFHRDGEPCERCGSIIEKTTLSSRPFYWCPGCQH. Arg-253 (proton donor; for delta-elimination activity) is an active-site residue.

Belongs to the FPG family. Zn(2+) is required as a cofactor.

It carries out the reaction 2'-deoxyribonucleotide-(2'-deoxyribose 5'-phosphate)-2'-deoxyribonucleotide-DNA = a 3'-end 2'-deoxyribonucleotide-(2,3-dehydro-2,3-deoxyribose 5'-phosphate)-DNA + a 5'-end 5'-phospho-2'-deoxyribonucleoside-DNA + H(+). Functionally, involved in base excision repair of DNA damaged by oxidation or by mutagenic agents. Acts as a DNA glycosylase that recognizes and removes damaged bases. Has a preference for oxidized pyrimidines, such as thymine glycol, 5,6-dihydrouracil and 5,6-dihydrothymine. Has AP (apurinic/apyrimidinic) lyase activity and introduces nicks in the DNA strand. Cleaves the DNA backbone by beta-delta elimination to generate a single-strand break at the site of the removed base with both 3'- and 5'-phosphates. The chain is Endonuclease 8 from Shigella sonnei (strain Ss046).